We begin with the raw amino-acid sequence, 37 residues long: Large ribosomal subunit protein bL36 (37 aa).

Belongs to the bacterial ribosomal protein bL36 family.

This is Large ribosomal subunit protein bL36 from Leptospira interrogans serogroup Icterohaemorrhagiae serovar copenhageni (strain Fiocruz L1-130).